The following is a 307-amino-acid chain: MGGPLMWALLLPLLLHQAGSQTSSCSVLSGYMDWTKEYFDTCLNFSGKILTQLPQNQSLRARSVQLLDLSANGLQRLPWSFFRDLEQLQLLIVTNNSLDFVDRALXXXGCGLELLADCSCALLDWHTDRQDNCSGPELPRCLDVPTGAWHNLSVFLDVSCPSGLTKIAIGALAASGSLLLVLAIAGPVLAWRFCRHRMDQNLSKTWASQDGSRSGSGRQPRYSSQGRRPKSPANTPPRSSTPDYENVFVGPPAARHQWDELRSPPSEGGDFYMTYDSLQHESQPVYCNLQSLSQVPLDDEEYVVPGR.

The first 20 residues, 1-20 (MGGPLMWALLLPLLLHQAGS), serve as a signal peptide directing secretion. Residues 21-168 (QTSSCSVLSG…SCPSGLTKIA (148 aa)) lie on the Extracellular side of the membrane. Residues N44 and N56 are each glycosylated (N-linked (GlcNAc...) asparagine). LRR repeat units lie at residues 63 to 86 (SVQL…RDLE) and 87 to 110 (QLQL…XXGC). N-linked (GlcNAc...) asparagine glycans are attached at residues N95, N132, and N151. Residues 169-189 (IGALAASGSLLLVLAIAGPVL) form a helical membrane-spanning segment. Over 190 to 307 (AWRFCRHRMD…DDEEYVVPGR (118 aa)) the chain is Cytoplasmic. Positions 205–249 (TWASQDGSRSGSGRQPRYSSQGRRPKSPANTPPRSSTPDYENVFV) are disordered. Residues 211 to 226 (GSRSGSGRQPRYSSQG) are compositionally biased toward low complexity. Residues 232-243 (PANTPPRSSTPD) are compositionally biased toward polar residues. Y286 is modified (phosphotyrosine).

As to quaternary structure, interacts with RIGI. Interacts with SQSTM1. Interacts with p65/RELA; this interaction promotes the degradation of RELA through autophagy.

Its subcellular location is the membrane. It localises to the cytoplasm. Its function is as follows. Plays a role in the inhibition of RLR-mediated type I interferon signaling pathway by targeting RIGI for autophagic degradation. Interacts specifically with ISG15-associated RIGI to promote interaction between RIGI and the autophagic cargo receptor p62/SQSTM1 to mediate RIGI degradation via selective autophagy. Plays also a role in the inhibition of NF-kappa-B signaling pathway and inflammatory response by promoting the degradation of p65/RELA. In Bos taurus (Bovine), this protein is Leucine-rich repeat-containing protein 25 (LRRC25).